We begin with the raw amino-acid sequence, 67 residues long: uncharacterized protein (67 aa).

This sequence belongs to the baculoviridae 8 kDa protein family.

This is an uncharacterized protein from Autographa californica nuclear polyhedrosis virus (AcMNPV).